The primary structure comprises 410 residues: Serine hydroxymethyltransferase (410 aa).

(6S)-5,6,7,8-tetrahydrofolate contacts are provided by residues Leu-119 and Gly-123 to Leu-125. At Lys-228 the chain carries N6-(pyridoxal phosphate)lysine. Ser-351 to Phe-353 serves as a coordination point for (6S)-5,6,7,8-tetrahydrofolate.

This sequence belongs to the SHMT family. In terms of assembly, homodimer. It depends on pyridoxal 5'-phosphate as a cofactor.

It is found in the cytoplasm. The catalysed reaction is (6R)-5,10-methylene-5,6,7,8-tetrahydrofolate + glycine + H2O = (6S)-5,6,7,8-tetrahydrofolate + L-serine. The protein operates within one-carbon metabolism; tetrahydrofolate interconversion. It participates in amino-acid biosynthesis; glycine biosynthesis; glycine from L-serine: step 1/1. Its function is as follows. Catalyzes the reversible interconversion of serine and glycine with tetrahydrofolate (THF) serving as the one-carbon carrier. This reaction serves as the major source of one-carbon groups required for the biosynthesis of purines, thymidylate, methionine, and other important biomolecules. Also exhibits THF-independent aldolase activity toward beta-hydroxyamino acids, producing glycine and aldehydes, via a retro-aldol mechanism. The chain is Serine hydroxymethyltransferase from Clostridium perfringens (strain ATCC 13124 / DSM 756 / JCM 1290 / NCIMB 6125 / NCTC 8237 / Type A).